The chain runs to 330 residues: Probable allantoicase (330 aa).

The protein belongs to the allantoicase family.

The enzyme catalyses allantoate + H2O = (S)-ureidoglycolate + urea. It functions in the pathway nitrogen metabolism; (S)-allantoin degradation; (S)-ureidoglycolate from allantoate (aminidohydrolase route): step 1/1. In Photobacterium profundum (strain SS9), this protein is Probable allantoicase.